Reading from the N-terminus, the 174-residue chain is Crossover junction endodeoxyribonuclease RuvC (174 aa).

Catalysis depends on residues Asp16, Glu76, and Asp148. Asp16, Glu76, and Asp148 together coordinate Mg(2+).

It belongs to the RuvC family. As to quaternary structure, homodimer which binds Holliday junction (HJ) DNA. The HJ becomes 2-fold symmetrical on binding to RuvC with unstacked arms; it has a different conformation from HJ DNA in complex with RuvA. In the full resolvosome a probable DNA-RuvA(4)-RuvB(12)-RuvC(2) complex forms which resolves the HJ. Mg(2+) serves as cofactor.

It localises to the cytoplasm. It carries out the reaction Endonucleolytic cleavage at a junction such as a reciprocal single-stranded crossover between two homologous DNA duplexes (Holliday junction).. The RuvA-RuvB-RuvC complex processes Holliday junction (HJ) DNA during genetic recombination and DNA repair. Endonuclease that resolves HJ intermediates. Cleaves cruciform DNA by making single-stranded nicks across the HJ at symmetrical positions within the homologous arms, yielding a 5'-phosphate and a 3'-hydroxyl group; requires a central core of homology in the junction. The consensus cleavage sequence is 5'-(A/T)TT(C/G)-3'. Cleavage occurs on the 3'-side of the TT dinucleotide at the point of strand exchange. HJ branch migration catalyzed by RuvA-RuvB allows RuvC to scan DNA until it finds its consensus sequence, where it cleaves and resolves the cruciform DNA. The chain is Crossover junction endodeoxyribonuclease RuvC from Rhodopseudomonas palustris (strain ATCC BAA-98 / CGA009).